Consider the following 109-residue polypeptide: Enhancer of rudimentary homolog (109 aa).

Belongs to the E(R) family. In terms of assembly, homodimer.

In terms of biological role, may have a role in the cell cycle. This chain is Enhancer of rudimentary homolog, found in Arabidopsis thaliana (Mouse-ear cress).